The sequence spans 254 residues: Triosephosphate isomerase (254 aa).

12-14 (NWK) lines the substrate pocket. The Electrophile role is filled by His-99. Glu-169 (proton acceptor) is an active-site residue. Substrate is bound by residues Gly-175, Ser-214, and 235-236 (GG).

It belongs to the triosephosphate isomerase family. In terms of assembly, homodimer.

It is found in the cytoplasm. The catalysed reaction is D-glyceraldehyde 3-phosphate = dihydroxyacetone phosphate. It functions in the pathway carbohydrate biosynthesis; gluconeogenesis. Its pathway is carbohydrate degradation; glycolysis; D-glyceraldehyde 3-phosphate from glycerone phosphate: step 1/1. Its function is as follows. Involved in the gluconeogenesis. Catalyzes stereospecifically the conversion of dihydroxyacetone phosphate (DHAP) to D-glyceraldehyde-3-phosphate (G3P). This is Triosephosphate isomerase from Brucella abortus biovar 1 (strain 9-941).